A 495-amino-acid polypeptide reads, in one-letter code: Internal alternative NAD(P)H-ubiquinone oxidoreductase A1, mitochondrial (495 aa).

The N-terminal 41 residues, 1 to 41 (MPWFKNLIKISKTITNQSSSYKSITPLASPLLTQFLQFTKQ), are a transit peptide targeting the mitochondrion. 61 to 91 (RIVVLGSGWAGCRLMKDIDTNIYDVVCVSPR) is an FAD binding site. NAD(+) is bound at residue 228–264 (LHCVVVGGGPTGVEFSGELSDFILKDVHQRYAHVKDY). Positions 486–495 (LVFGRDISRI) match the Microbody targeting signal motif.

It belongs to the NADH dehydrogenase family. The cofactor is FAD.

The protein localises to the mitochondrion inner membrane. It is found in the peroxisome. The enzyme catalyses a quinone + NADH + H(+) = a quinol + NAD(+). The catalysed reaction is a ubiquinone + NADH + H(+) = a ubiquinol + NAD(+). Functionally, alternative NADH-ubiquinone oxidoreductase which catalyzes the oxidation of mitochondrial NADH does not translocate protons across the inner mitochondrial membrane. The chain is Internal alternative NAD(P)H-ubiquinone oxidoreductase A1, mitochondrial (NDA1) from Solanum tuberosum (Potato).